The following is a 302-amino-acid chain: Dihydroorotate dehydrogenase B (NAD(+)), catalytic subunit (302 aa).

FMN-binding positions include Ser20 and 44-45 (KG). Substrate is bound by residues Lys44 and 68 to 72 (NSVGL). FMN contacts are provided by Asn98 and Asn125. Asn125 serves as a coordination point for substrate. Cys128 serves as the catalytic Nucleophile. FMN contacts are provided by Lys163 and Ile189. 190–191 (NT) contacts substrate. FMN contacts are provided by residues Gly215, 241 to 242 (GG), and 263 to 264 (GT).

Belongs to the dihydroorotate dehydrogenase family. Type 1 subfamily. In terms of assembly, heterotetramer of 2 PyrK and 2 PyrD type B subunits. FMN serves as cofactor.

It localises to the cytoplasm. It carries out the reaction (S)-dihydroorotate + NAD(+) = orotate + NADH + H(+). It participates in pyrimidine metabolism; UMP biosynthesis via de novo pathway; orotate from (S)-dihydroorotate (NAD(+) route): step 1/1. In terms of biological role, catalyzes the conversion of dihydroorotate to orotate with NAD(+) as electron acceptor. The chain is Dihydroorotate dehydrogenase B (NAD(+)), catalytic subunit (pyrD) from Thermoanaerobacter sp. (strain X514).